The chain runs to 147 residues: Hemoglobin subunit beta (147 aa).

Positions 3–147 (EWTDKERSII…VVSALGKQYH (145 aa)) constitute a Globin domain. Residues H64 and H93 each coordinate heme b.

It belongs to the globin family. In terms of assembly, hb1 is a heterotetramer of two alpha chains and two beta chains. In terms of tissue distribution, red blood cells.

Its function is as follows. Involved in oxygen transport from gills to the various peripheral tissues. This Trematomus bernacchii (Emerald rockcod) protein is Hemoglobin subunit beta (hbb).